The primary structure comprises 184 residues: Phosphorelay intermediate protein YPD1 (184 aa).

One can recognise an HPt domain in the interval E30 to G125. A Phosphohistidine modification is found at H69. Positions V120–S152 are disordered. A compositionally biased stretch (low complexity) spans G125–N147.

Belongs to the YPD1 family.

The protein localises to the cytoplasm. It localises to the nucleus. Functionally, phosphorelay intermediate protein that is part of the bifurcated SLN1-YPD1-SKN7/SSK1 two-component regulatory system, which controls activity of the HOG1 pathway and gene expression in response to oxidative stress and probably to changes in the osmolarity of the extracellular environment. Catalyzes the phosphoryl group transfer from the membrane-bound histidine kinase SLN1 to two distinct response regulators SSK1 and SKN7. This Candida albicans (strain SC5314 / ATCC MYA-2876) (Yeast) protein is Phosphorelay intermediate protein YPD1 (YPD1).